The sequence spans 438 residues: Aspartate--tRNA(Asp/Asn) ligase (438 aa).

Glu-176 is an L-aspartate binding site. The aspartate stretch occupies residues 198-201; that stretch reads QLYK. An L-aspartate-binding site is contributed by Arg-220. ATP contacts are provided by residues 220–222, 228–230, and Glu-361; these read RAE and RHL. Mg(2+) contacts are provided by Glu-361 and Ser-364. Ser-364 and Arg-368 together coordinate L-aspartate. 409–412 is a binding site for ATP; that stretch reads GADR.

Belongs to the class-II aminoacyl-tRNA synthetase family. Type 2 subfamily. As to quaternary structure, homodimer. Mg(2+) is required as a cofactor.

It is found in the cytoplasm. The catalysed reaction is tRNA(Asx) + L-aspartate + ATP = L-aspartyl-tRNA(Asx) + AMP + diphosphate. In terms of biological role, aspartyl-tRNA synthetase with relaxed tRNA specificity since it is able to aspartylate not only its cognate tRNA(Asp) but also tRNA(Asn). Reaction proceeds in two steps: L-aspartate is first activated by ATP to form Asp-AMP and then transferred to the acceptor end of tRNA(Asp/Asn). This chain is Aspartate--tRNA(Asp/Asn) ligase, found in Methanococcus maripaludis (strain DSM 14266 / JCM 13030 / NBRC 101832 / S2 / LL).